A 163-amino-acid chain; its full sequence is 2-C-methyl-D-erythritol 2,4-cyclodiphosphate synthase (163 aa).

A divalent metal cation contacts are provided by aspartate 8 and histidine 10. 4-CDP-2-C-methyl-D-erythritol 2-phosphate-binding positions include 8 to 10 and 34 to 35; these read DVH and HS. Histidine 42 serves as a coordination point for a divalent metal cation. Residues 56–58, 132–135, phenylalanine 139, and arginine 142 contribute to the 4-CDP-2-C-methyl-D-erythritol 2-phosphate site; these read DIG and TTTE.

It belongs to the IspF family. In terms of assembly, homotrimer. Requires a divalent metal cation as cofactor.

The catalysed reaction is 4-CDP-2-C-methyl-D-erythritol 2-phosphate = 2-C-methyl-D-erythritol 2,4-cyclic diphosphate + CMP. Its pathway is isoprenoid biosynthesis; isopentenyl diphosphate biosynthesis via DXP pathway; isopentenyl diphosphate from 1-deoxy-D-xylulose 5-phosphate: step 4/6. Functionally, involved in the biosynthesis of isopentenyl diphosphate (IPP) and dimethylallyl diphosphate (DMAPP), two major building blocks of isoprenoid compounds. Catalyzes the conversion of 4-diphosphocytidyl-2-C-methyl-D-erythritol 2-phosphate (CDP-ME2P) to 2-C-methyl-D-erythritol 2,4-cyclodiphosphate (ME-CPP) with a corresponding release of cytidine 5-monophosphate (CMP). The protein is 2-C-methyl-D-erythritol 2,4-cyclodiphosphate synthase of Moorella thermoacetica (strain ATCC 39073 / JCM 9320).